Consider the following 747-residue polypeptide: Pyrin (747 aa).

The 92-residue stretch at 1–92 (MANTRVDHLL…AEELHKATGP (92 aa)) folds into the Pyrin domain. The disordered stretch occupies residues 89–181 (ATGPEHLTEE…GARSAAPLYR (93 aa)). The segment covering 122–135 (PGEDEAQQNDDESD) has biased composition (acidic residues). Positions 442, 445, 465, and 471 each coordinate Zn(2+). Residues 442 to 479 (CPRHMKQVQLLFCEDHREPICLICRLSQEHQGHRVRPI) form a B box-type zinc finger. Residues 479-508 (IEEAALQYKEQIRKQLERLREMRGYVEEHK) adopt a coiled-coil conformation. Residues 487 to 645 (KEQIRKQLER…RFSEMLGSEM (159 aa)) are required for homotrimerization and induction of pyroptosomes. Positions 698 to 720 (EPQDYLHPSSAQDTPELHEIHSQ) are disordered.

In terms of assembly, homotrimer. Interacts (via the B box-type zinc finger) with PSTPIP1. Interacts (via the B30.2/SPRY domain) with several components of the inflammasome complex, including CASP1 p20 and p10 subunits, CASP5, PYCARD, NLRP1, NLRP2 and NLRP3, as well as with unprocessed IL1B; this interaction may lead to autophagic degradation of these proteins. Component of the AIM2 PANoptosome complex, a multiprotein complex that drives inflammatory cell death (PANoptosis). Interacts with NFKBIA and RELA. Interacts weakly with VASP and ACTR3. Interacts with active ULK1 (phosphorylated on 'Ser-317') and BECN1 simultaneously. Also interacts with ATG16L1 (via WD repeats), and with ATG8 family members, including GABARAP, GABARAPL1 and, to a lesser extent, GABARAPL2, MAP1LC3A/LC3A and MAP1LC3C/LC3C. Interacts with TRIM21. Interacts with YWHAB, YWHAE, YWHAG, YWHAH, YWHAQ and YWHAZ; the interaction is required for the down-regulation of pyrin pro-inflammatory activity. In terms of processing, degraded along with the delivery of its substrates to autolysosomal compartments (at protein level). Expressed in spleen and, to a lesser degree in the lung. Not expressed in thymus, testis, ovary, heart, brain, liver, kidney and muscle.

The protein localises to the cytoplasm. It localises to the cytoskeleton. Its subcellular location is the cell projection. It is found in the ruffle. The protein resides in the lamellipodium. The protein localises to the cytoplasmic vesicle. It localises to the autophagosome. Its subcellular location is the nucleus. In terms of biological role, involved in the regulation of innate immunity and the inflammatory response in response to IFNG/IFN-gamma. Organizes autophagic machinery by serving as a platform for the assembly of ULK1, Beclin 1/BECN1, ATG16L1, and ATG8 family members and recognizes specific autophagy targets, thus coordinating target recognition with assembly of the autophagic apparatus and initiation of autophagy. Acts as an autophagy receptor for the degradation of several inflammasome components, including CASP1, NLRP1 and NLRP3, hence preventing excessive IL1B- and IL18-mediated inflammation. However, it can also have a positive effect in the inflammatory pathway, acting as an innate immune sensor that triggers PYCARD/ASC specks formation, caspase-1 activation, and IL1B and IL18 production. Together with AIM2, also acts as a mediator of pyroptosis, necroptosis and apoptosis (PANoptosis), an integral part of host defense against pathogens, in response to bacterial infection. It is required for PSTPIP1-induced PYCARD/ASC oligomerization and inflammasome formation. Recruits PSTPIP1 to inflammasomes, and is required for PSTPIP1 oligomerization. This chain is Pyrin, found in Rattus norvegicus (Rat).